We begin with the raw amino-acid sequence, 366 residues long: Flagellar P-ring protein (366 aa).

An N-terminal signal peptide occupies residues 1–20 (MVIKFLSALILLLVTTAAQA).

It belongs to the FlgI family. The basal body constitutes a major portion of the flagellar organelle and consists of four rings (L,P,S, and M) mounted on a central rod.

Its subcellular location is the periplasm. The protein resides in the bacterial flagellum basal body. Functionally, assembles around the rod to form the L-ring and probably protects the motor/basal body from shearing forces during rotation. The polypeptide is Flagellar P-ring protein (Escherichia coli (strain UTI89 / UPEC)).